The sequence spans 105 residues: Platelet factor 4 (105 aa).

Residues 1-29 (MSAAAVFRGLRPSPELLLLGLLLLPAVVA) form the signal peptide. O-linked (GalNAc...) threonine; partial glycosylation is present at threonine 31. Intrachain disulfides connect cysteine 44-cysteine 71 and cysteine 46-cysteine 87. Phosphoserine is present on serine 61. 96–102 (KKIIKKL) lines the heparin pocket.

This sequence belongs to the intercrine alpha (chemokine CxC) family. Homotetramer. Interacts with TNFAIP6 (via Link domain). Interacts with CCR1. Interacts with CXCR3. Interacts with THBD; this interaction enhances generation of activated protein C. O-linked glycan consists of Gal-GalNAc disaccharide which is modified with sialic acid residues (microheterogeneity).

It localises to the secreted. Functionally, chemokine released during platelet aggregation that plays a role in different biological processes including hematopoiesis, cell proliferation, differentiation, and activation. Acts via different functional receptors including CCR1, CXCR3A or CXCR3B. Upon interaction with CXCR3A receptor, induces activated T-lymphocytes migration mediated via downstream Ras/extracellular signal-regulated kinase (ERK) signaling. Neutralizes the anticoagulant effect of heparin by binding more strongly to heparin than to the chondroitin-4-sulfate chains of the carrier molecule. Plays a role in the inhibition of hematopoiesis and in the maintenance of hematopoietic stem cell (HSC) quiescence. Chemotactic for neutrophils and monocytes via CCR1. Inhibits endothelial cell proliferation. In cooperation with toll-like receptor 8/TLR8, induces chromatin remodeling and activates inflammatory gene expression via the TBK1-IRF5 axis. In addition, induces myofibroblast differentiation and collagen synthesis in different precursor cells, including endothelial cells, by stimulating endothelial-to-mesenchymal transition. Interacts with thrombomodulin/THBD to enhance the activation of protein C and thus potentiates its anticoagulant activity. This is Platelet factor 4 (Pf4) from Rattus norvegicus (Rat).